Here is a 181-residue protein sequence, read N- to C-terminus: MSEAPKKRWYVVQAFSGFEGRVATSLREHIKLHNMEELFGEVMVPTEEVVEIRGGQRRKSERKFFPGYVLVQMVMNDASWHLVRSVPRVMGFIGGTSDRPAPISDKEVDAIMNRLQQVGDKPRPKTLFEPGEMVRVNDGPFADFNGVVEEVDYEKSRLKVSVSIFGRATPVELDFSQVEKA.

A KOW domain is found at 130–161 (PGEMVRVNDGPFADFNGVVEEVDYEKSRLKVS).

The protein belongs to the NusG family. As to quaternary structure, monomer. Interacts with the transcription termination factor Rho and with RNA polymerase.

Its function is as follows. Participates in transcription elongation, termination and antitermination. In the absence of Rho, increases the rate of transcription elongation by the RNA polymerase (RNAP), probably by partially suppressing pausing. In the presence of Rho, modulates most Rho-dependent termination events by interacting with the RNAP to render the complex more susceptible to the termination activity of Rho. May be required to overcome a kinetic limitation of Rho to function at certain terminators. Also involved in ribosomal RNA transcriptional antitermination. This chain is Transcription termination/antitermination protein NusG, found in Salmonella typhi.